The primary structure comprises 210 residues: Outer-membrane lipoprotein carrier protein (210 aa).

Positions 1–23 are cleaved as a signal peptide; that stretch reads MLMFSRFRYIFFAVALLSGPVCA.

Belongs to the LolA family. In terms of assembly, monomer.

The protein localises to the periplasm. Functionally, participates in the translocation of lipoproteins from the inner membrane to the outer membrane. Only forms a complex with a lipoprotein if the residue after the N-terminal Cys is not an aspartate (The Asp acts as a targeting signal to indicate that the lipoprotein should stay in the inner membrane). This Xylella fastidiosa (strain Temecula1 / ATCC 700964) protein is Outer-membrane lipoprotein carrier protein.